Consider the following 427-residue polypeptide: CCA-adding enzyme (427 aa).

Residues serine 50 and lysine 53 each coordinate ATP. The CTP site is built by serine 50 and lysine 53. Mg(2+) contacts are provided by aspartate 61, aspartate 63, and aspartate 112. ATP-binding residues include histidine 135, lysine 155, and tyrosine 164. Residues histidine 135, lysine 155, and tyrosine 164 each coordinate CTP.

This sequence belongs to the tRNA nucleotidyltransferase/poly(A) polymerase family. Archaeal CCA-adding enzyme subfamily. Homodimer. Mg(2+) serves as cofactor.

It carries out the reaction a tRNA precursor + 2 CTP + ATP = a tRNA with a 3' CCA end + 3 diphosphate. The catalysed reaction is a tRNA with a 3' CCA end + 2 CTP + ATP = a tRNA with a 3' CCACCA end + 3 diphosphate. Functionally, catalyzes the addition and repair of the essential 3'-terminal CCA sequence in tRNAs without using a nucleic acid template. Adds these three nucleotides in the order of C, C, and A to the tRNA nucleotide-73, using CTP and ATP as substrates and producing inorganic pyrophosphate. tRNA 3'-terminal CCA addition is required both for tRNA processing and repair. Also involved in tRNA surveillance by mediating tandem CCA addition to generate a CCACCA at the 3' terminus of unstable tRNAs. While stable tRNAs receive only 3'-terminal CCA, unstable tRNAs are marked with CCACCA and rapidly degraded. In Picrophilus torridus (strain ATCC 700027 / DSM 9790 / JCM 10055 / NBRC 100828 / KAW 2/3), this protein is CCA-adding enzyme.